A 362-amino-acid polypeptide reads, in one-letter code: 3-dehydroquinate synthase (362 aa).

Residues 71-76 (DGEQYK), 105-109 (GVVGD), 129-130 (TT), Lys-142, Lys-151, and 169-172 (CLNT) contribute to the NAD(+) site. Glu-184, His-247, and His-264 together coordinate Zn(2+).

This sequence belongs to the sugar phosphate cyclases superfamily. Dehydroquinate synthase family. Co(2+) serves as cofactor. Requires Zn(2+) as cofactor. It depends on NAD(+) as a cofactor.

The protein resides in the cytoplasm. The catalysed reaction is 7-phospho-2-dehydro-3-deoxy-D-arabino-heptonate = 3-dehydroquinate + phosphate. It functions in the pathway metabolic intermediate biosynthesis; chorismate biosynthesis; chorismate from D-erythrose 4-phosphate and phosphoenolpyruvate: step 2/7. In terms of biological role, catalyzes the conversion of 3-deoxy-D-arabino-heptulosonate 7-phosphate (DAHP) to dehydroquinate (DHQ). The polypeptide is 3-dehydroquinate synthase (Enterobacter sp. (strain 638)).